The primary structure comprises 154 residues: GTP-dependent dephospho-CoA kinase (154 aa).

The GTP site is built by aspartate 34, aspartate 53, and glutamate 107.

It belongs to the GTP-dependent DPCK family.

It carries out the reaction 3'-dephospho-CoA + GTP = GDP + CoA + H(+). Its pathway is cofactor biosynthesis; coenzyme A biosynthesis. Functionally, catalyzes the GTP-dependent phosphorylation of the 3'-hydroxyl group of dephosphocoenzyme A to form coenzyme A (CoA). This is GTP-dependent dephospho-CoA kinase from Nitrosopumilus maritimus (strain SCM1).